An 82-amino-acid chain; its full sequence is Large ribosomal subunit protein uL23 (82 aa).

It belongs to the universal ribosomal protein uL23 family. As to quaternary structure, part of the 50S ribosomal subunit. Contacts protein L29.

Functionally, binds to 23S rRNA. One of the proteins that surrounds the polypeptide exit tunnel on the outside of the ribosome. The chain is Large ribosomal subunit protein uL23 from Methanosarcina mazei (strain ATCC BAA-159 / DSM 3647 / Goe1 / Go1 / JCM 11833 / OCM 88) (Methanosarcina frisia).